A 276-amino-acid chain; its full sequence is Putative pyruvate, phosphate dikinase regulatory protein (276 aa).

154–161 is an ADP binding site; sequence GVSRTSKS.

This sequence belongs to the pyruvate, phosphate/water dikinase regulatory protein family. PDRP subfamily.

The enzyme catalyses N(tele)-phospho-L-histidyl/L-threonyl-[pyruvate, phosphate dikinase] + ADP = N(tele)-phospho-L-histidyl/O-phospho-L-threonyl-[pyruvate, phosphate dikinase] + AMP + H(+). It catalyses the reaction N(tele)-phospho-L-histidyl/O-phospho-L-threonyl-[pyruvate, phosphate dikinase] + phosphate + H(+) = N(tele)-phospho-L-histidyl/L-threonyl-[pyruvate, phosphate dikinase] + diphosphate. In terms of biological role, bifunctional serine/threonine kinase and phosphorylase involved in the regulation of the pyruvate, phosphate dikinase (PPDK) by catalyzing its phosphorylation/dephosphorylation. This Wolbachia pipientis wMel protein is Putative pyruvate, phosphate dikinase regulatory protein.